The chain runs to 345 residues: Phosphate acyltransferase (345 aa).

The protein belongs to the PlsX family. In terms of assembly, homodimer. Probably interacts with PlsY.

The protein resides in the cytoplasm. It catalyses the reaction a fatty acyl-[ACP] + phosphate = an acyl phosphate + holo-[ACP]. It participates in lipid metabolism; phospholipid metabolism. Its function is as follows. Catalyzes the reversible formation of acyl-phosphate (acyl-PO(4)) from acyl-[acyl-carrier-protein] (acyl-ACP). This enzyme utilizes acyl-ACP as fatty acyl donor, but not acyl-CoA. The polypeptide is Phosphate acyltransferase (Wolbachia sp. subsp. Drosophila simulans (strain wRi)).